We begin with the raw amino-acid sequence, 106 residues long: ATP-dependent Clp protease adapter protein ClpS (106 aa).

This sequence belongs to the ClpS family. In terms of assembly, binds to the N-terminal domain of the chaperone ClpA.

Its function is as follows. Involved in the modulation of the specificity of the ClpAP-mediated ATP-dependent protein degradation. This Aliivibrio fischeri (strain ATCC 700601 / ES114) (Vibrio fischeri) protein is ATP-dependent Clp protease adapter protein ClpS.